We begin with the raw amino-acid sequence, 411 residues long: LL-diaminopimelate aminotransferase (411 aa).

Positions 15 and 42 each coordinate substrate. Residues Tyr72, 108–109 (SK), Tyr132, Asn187, Tyr218, and 246–248 (SFS) each bind pyridoxal 5'-phosphate. 3 residues coordinate substrate: Lys109, Tyr132, and Asn187. At Lys249 the chain carries N6-(pyridoxal phosphate)lysine. Pyridoxal 5'-phosphate-binding residues include Arg257 and Asn292. 2 residues coordinate substrate: Asn292 and Arg388.

This sequence belongs to the class-I pyridoxal-phosphate-dependent aminotransferase family. LL-diaminopimelate aminotransferase subfamily. As to quaternary structure, homodimer. Pyridoxal 5'-phosphate is required as a cofactor.

It carries out the reaction (2S,6S)-2,6-diaminopimelate + 2-oxoglutarate = (S)-2,3,4,5-tetrahydrodipicolinate + L-glutamate + H2O + H(+). The protein operates within amino-acid biosynthesis; L-lysine biosynthesis via DAP pathway; LL-2,6-diaminopimelate from (S)-tetrahydrodipicolinate (aminotransferase route): step 1/1. Functionally, involved in the synthesis of meso-diaminopimelate (m-DAP or DL-DAP), required for both lysine and peptidoglycan biosynthesis. Catalyzes the direct conversion of tetrahydrodipicolinate to LL-diaminopimelate. The polypeptide is LL-diaminopimelate aminotransferase (Trichodesmium erythraeum (strain IMS101)).